Here is a 149-residue protein sequence, read N- to C-terminus: uncharacterized protein (149 aa).

This is an uncharacterized protein from Homo sapiens (Human).